Reading from the N-terminus, the 183-residue chain is UPF0398 protein MCCL_1095 (183 aa).

This sequence belongs to the UPF0398 family.

The sequence is that of UPF0398 protein MCCL_1095 from Macrococcus caseolyticus (strain JCSC5402) (Macrococcoides caseolyticum).